Here is a 117-residue protein sequence, read N- to C-terminus: Large ribosomal subunit protein bL20c (117 aa).

This sequence belongs to the bacterial ribosomal protein bL20 family.

The protein localises to the plastid. It localises to the chloroplast. Functionally, binds directly to 23S ribosomal RNA and is necessary for the in vitro assembly process of the 50S ribosomal subunit. It is not involved in the protein synthesizing functions of that subunit. This Acorus gramineus (Dwarf sweet flag) protein is Large ribosomal subunit protein bL20c.